The chain runs to 689 residues: Protein asunder (689 aa).

A coiled-coil region spans residues 521 to 550; sequence NGARLKLSKAKDQYRLLYRELEQLIQLNAT. 2 disordered regions span residues 591 to 619 and 669 to 689; these read SPER…SKRR and KDAV…SVRS. Low complexity predominate over residues 599–614; the sequence is SSVGASGSSNSNSLLK. Positions 613–619 match the Nuclear localization signal (NLS) motif; sequence LKASKRR.

The protein belongs to the Integrator subunit 13 family. As to quaternary structure, belongs to the multiprotein complex Integrator, at least composed of IntS1, IntS2, IntS3, IntS4, omd/IntS5, IntS6, defl/IntS7, IntS8, IntS9, IntS10, IntS11, IntS12, asun/IntS13, IntS14 and IntS15. The core complex associates with protein phosphatase 2A subunits mts/PP2A and Pp2A-29B, to form the Integrator-PP2A (INTAC) complex. Phosphorylated.

The protein localises to the nucleus. The protein resides in the cytoplasm. It localises to the perinuclear region. In terms of biological role, component of the integrator complex, a multiprotein complex that terminates RNA polymerase II (Pol II) transcription in the promoter-proximal region of genes. The integrator complex provides a quality checkpoint during transcription elongation by driving premature transcription termination of transcripts that are unfavorably configured for transcriptional elongation: the complex terminates transcription by (1) catalyzing dephosphorylation of the C-terminal domain (CTD) of Pol II subunit Polr2A/Rbp1 and Spt5, and (2) degrading the exiting nascent RNA transcript via endonuclease activity. The integrator complex is also involved in the 3'-end processing of the U7 snRNA, and also the spliceosomal snRNAs U1, U2, U4 and U5. This Drosophila simulans (Fruit fly) protein is Protein asunder (asun).